A 226-amino-acid polypeptide reads, in one-letter code: Ribonuclease 3 (226 aa).

Residues 6-128 enclose the RNase III domain; the sequence is INRLQRKLGY…LIGGIFLDSD (123 aa). Residue E41 participates in Mg(2+) binding. D45 is a catalytic residue. D114 and E117 together coordinate Mg(2+). Residue E117 is part of the active site. The DRBM domain occupies 155–225; the sequence is DPKTRLQEYL…AEQALKQLEL (71 aa).

The protein belongs to the ribonuclease III family. As to quaternary structure, homodimer. Mg(2+) is required as a cofactor.

It localises to the cytoplasm. It carries out the reaction Endonucleolytic cleavage to 5'-phosphomonoester.. Its function is as follows. Digests double-stranded RNA. Involved in the processing of primary rRNA transcript to yield the immediate precursors to the large and small rRNAs (23S and 16S). Processes some mRNAs, and tRNAs when they are encoded in the rRNA operon. Processes pre-crRNA and tracrRNA of type II CRISPR loci if present in the organism. The protein is Ribonuclease 3 of Yersinia enterocolitica serotype O:8 / biotype 1B (strain NCTC 13174 / 8081).